A 186-amino-acid polypeptide reads, in one-letter code: Dihydrofolate reductase (186 aa).

Residues 2 to 180 enclose the DHFR domain; the sequence is RLNVVVAVSE…FTFKFCVYDV (179 aa). Residues A8 and 14–20 each bind NADP(+); that span reads GIGKGGG. 28 to 33 serves as a coordination point for substrate; the sequence is DMEFFK. NADP(+) is bound at residue 51-53; that stretch reads RVT. R67 provides a ligand contact to substrate. NADP(+)-binding positions include 73–75 and 112–119; these read SST and GGYRLYKE.

Belongs to the dihydrofolate reductase family. As to quaternary structure, monomer.

It catalyses the reaction (6S)-5,6,7,8-tetrahydrofolate + NADP(+) = 7,8-dihydrofolate + NADPH + H(+). It functions in the pathway cofactor biosynthesis; tetrahydrofolate biosynthesis; 5,6,7,8-tetrahydrofolate from 7,8-dihydrofolate: step 1/1. Its function is as follows. Key enzyme in folate metabolism. Contributes to the de novo mitochondrial thymidylate biosynthesis pathway. Catalyzes an essential reaction for de novo glycine and purine synthesis, and for DNA precursor synthesis. The protein is Dihydrofolate reductase of Schistosoma mansoni (Blood fluke).